A 183-amino-acid chain; its full sequence is Dual-action ribosomal maturation protein DarP (183 aa).

The interval 1–20 is disordered; sequence MKQKYEDWLNDVPDNQEDDE.

Belongs to the DarP family.

Its subcellular location is the cytoplasm. Its function is as follows. Member of a network of 50S ribosomal subunit biogenesis factors which assembles along the 30S-50S interface, preventing incorrect 23S rRNA structures from forming. Promotes peptidyl transferase center (PTC) maturation. This is Dual-action ribosomal maturation protein DarP from Pectobacterium carotovorum subsp. carotovorum (strain PC1).